Here is a 310-residue protein sequence, read N- to C-terminus: Putative sugar kinase PH1459 (310 aa).

Positions 194, 219, and 224 each coordinate ATP.

It belongs to the carbohydrate kinase PfkB family.

The chain is Putative sugar kinase PH1459 from Pyrococcus horikoshii (strain ATCC 700860 / DSM 12428 / JCM 9974 / NBRC 100139 / OT-3).